Reading from the N-terminus, the 629-residue chain is tRNA uridine 5-carboxymethylaminomethyl modification enzyme MnmG (629 aa).

FAD-binding positions include 13-18, valine 125, and serine 180; that span reads GGGHAG. Residue 273-287 coordinates NAD(+); the sequence is GPRYCPSIEDKIHRF. Position 370 (glutamine 370) interacts with FAD.

It belongs to the MnmG family. As to quaternary structure, homodimer. Heterotetramer of two MnmE and two MnmG subunits. FAD serves as cofactor.

It is found in the cytoplasm. Functionally, NAD-binding protein involved in the addition of a carboxymethylaminomethyl (cmnm) group at the wobble position (U34) of certain tRNAs, forming tRNA-cmnm(5)s(2)U34. This is tRNA uridine 5-carboxymethylaminomethyl modification enzyme MnmG from Shewanella oneidensis (strain ATCC 700550 / JCM 31522 / CIP 106686 / LMG 19005 / NCIMB 14063 / MR-1).